The following is a 209-amino-acid chain: NAD(P)H dehydrogenase (quinone) (209 aa).

The 196-residue stretch at 4–199 (VNIIFYSMYG…AMARYQGRHV (196 aa)) folds into the Flavodoxin-like domain. Residues 10–15 (SMYGHV) and 87–89 (TRY) contribute to the FMN site. Tyr-12 is an NAD(+) binding site. Trp-107 lines the substrate pocket. Residues 122 to 128 (SSGTQHG) and His-143 each bind FMN.

It belongs to the WrbA family. FMN serves as cofactor.

The enzyme catalyses a quinone + NADH + H(+) = a quinol + NAD(+). The catalysed reaction is a quinone + NADPH + H(+) = a quinol + NADP(+). In Methanosarcina acetivorans (strain ATCC 35395 / DSM 2834 / JCM 12185 / C2A), this protein is NAD(P)H dehydrogenase (quinone).